A 323-amino-acid chain; its full sequence is Acetyl-coenzyme A carboxylase carboxyl transferase subunit alpha (323 aa).

A CoA carboxyltransferase C-terminal domain is found at 39–293 (RLSKKSQQLT…RRALADSLRQ (255 aa)).

This sequence belongs to the AccA family. Acetyl-CoA carboxylase is a heterohexamer composed of biotin carboxyl carrier protein (AccB), biotin carboxylase (AccC) and two subunits each of ACCase subunit alpha (AccA) and ACCase subunit beta (AccD).

The protein localises to the cytoplasm. The enzyme catalyses N(6)-carboxybiotinyl-L-lysyl-[protein] + acetyl-CoA = N(6)-biotinyl-L-lysyl-[protein] + malonyl-CoA. It functions in the pathway lipid metabolism; malonyl-CoA biosynthesis; malonyl-CoA from acetyl-CoA: step 1/1. Functionally, component of the acetyl coenzyme A carboxylase (ACC) complex. First, biotin carboxylase catalyzes the carboxylation of biotin on its carrier protein (BCCP) and then the CO(2) group is transferred by the carboxyltransferase to acetyl-CoA to form malonyl-CoA. The sequence is that of Acetyl-coenzyme A carboxylase carboxyl transferase subunit alpha from Burkholderia orbicola (strain AU 1054).